The sequence spans 649 residues: MFPNDKTPLLDKIKTPAELRQLDRNSLRQLADELRKETISAVGVTGGHLGSGLGVIELTVALHYVFNTPKDALVWDVGHQTYPHKILTGRRDRIRTLRQRDGLSGFTQRAESEYDAFGAAHSSTSISAALGFAMASKLSDSDDKAVAIIGDGSMTAGMAYEAMNNAKAAGKRLIVILNDNEMSISPPVGALSSYLSRLISSRPFMNLRDIMRGVVNRMPKGLATAARKADEYARGMATGGTFFEELGFYYVGPVDGHNLDQLIPVLENVRDAKDGPILVHVVTRKGQGYAPAEAAKDKYHAVQRLDVVSGKQAKAPPGPPSYTSVFSEQLIKEAKQDDKIVTITAAMPTGTGLDRFQQYFPERMFDVGIAEQHAVTFAAGLAAAGYKPFCCLYSTFLQRGYDQLVHDVAIQNLPVRFAVDRAGLVGADGATHAGSFDLAFMVNLPNMVVMAPSDERELANMVHSMAHYDQGPISVRYPRGNGVGVSLEGEKEILPIGKGRLIRRGKKVAILSLGTRLEESLKAADRLDAQGLSTSVADMRFAKPLDEALTRQLLKSHQVIITIEEGALGGFATQVLTMASDEGLMDDGLKIRTLRLPDRFQPQDKQERQYAEAGLDADGIVAAVISALHRNSKPVEVVEMANMGSIARA.

Thiamine diphosphate is bound by residues histidine 79 and 120 to 122 (AHS). Aspartate 151 contacts Mg(2+). Thiamine diphosphate contacts are provided by residues 152-153 (GS), asparagine 180, tyrosine 289, and glutamate 371. Asparagine 180 is a Mg(2+) binding site.

It belongs to the transketolase family. DXPS subfamily. In terms of assembly, homodimer. Requires Mg(2+) as cofactor. Thiamine diphosphate serves as cofactor.

The enzyme catalyses D-glyceraldehyde 3-phosphate + pyruvate + H(+) = 1-deoxy-D-xylulose 5-phosphate + CO2. The protein operates within metabolic intermediate biosynthesis; 1-deoxy-D-xylulose 5-phosphate biosynthesis; 1-deoxy-D-xylulose 5-phosphate from D-glyceraldehyde 3-phosphate and pyruvate: step 1/1. Its function is as follows. Catalyzes the acyloin condensation reaction between C atoms 2 and 3 of pyruvate and glyceraldehyde 3-phosphate to yield 1-deoxy-D-xylulose-5-phosphate (DXP). This is 1-deoxy-D-xylulose-5-phosphate synthase 1 from Zymomonas mobilis subsp. mobilis (strain ATCC 31821 / ZM4 / CP4).